Reading from the N-terminus, the 484-residue chain is tRNA sulfurtransferase (484 aa).

A THUMP domain is found at 63–167 (QGIRDRLSCM…DQRLFVVHDQ (105 aa)). Residues 185–186 (LM), Lys267, Gly289, and Gln298 contribute to the ATP site. Residues Cys346 and Cys457 are joined by a disulfide bond. The Rhodanese domain maps to 405–483 (ALAGQVIIDI…GHANVRVYRP (79 aa)). The Cysteine persulfide intermediate role is filled by Cys457.

Belongs to the ThiI family.

It localises to the cytoplasm. It catalyses the reaction [ThiI sulfur-carrier protein]-S-sulfanyl-L-cysteine + a uridine in tRNA + 2 reduced [2Fe-2S]-[ferredoxin] + ATP + H(+) = [ThiI sulfur-carrier protein]-L-cysteine + a 4-thiouridine in tRNA + 2 oxidized [2Fe-2S]-[ferredoxin] + AMP + diphosphate. It carries out the reaction [ThiS sulfur-carrier protein]-C-terminal Gly-Gly-AMP + S-sulfanyl-L-cysteinyl-[cysteine desulfurase] + AH2 = [ThiS sulfur-carrier protein]-C-terminal-Gly-aminoethanethioate + L-cysteinyl-[cysteine desulfurase] + A + AMP + 2 H(+). It functions in the pathway cofactor biosynthesis; thiamine diphosphate biosynthesis. Its function is as follows. Catalyzes the ATP-dependent transfer of a sulfur to tRNA to produce 4-thiouridine in position 8 of tRNAs, which functions as a near-UV photosensor. Also catalyzes the transfer of sulfur to the sulfur carrier protein ThiS, forming ThiS-thiocarboxylate. This is a step in the synthesis of thiazole, in the thiamine biosynthesis pathway. The sulfur is donated as persulfide by IscS. This is tRNA sulfurtransferase from Pseudomonas syringae pv. tomato (strain ATCC BAA-871 / DC3000).